The chain runs to 308 residues: Oxygen-dependent coproporphyrinogen-III oxidase (308 aa).

Ser100 serves as a coordination point for substrate. A divalent metal cation contacts are provided by His104 and His114. His114 acts as the Proton donor in catalysis. Position 116–118 (116–118) interacts with substrate; it reads NFR. A divalent metal cation is bound by residues His153 and His183. The important for dimerization stretch occupies residues 248–283; the sequence is YVEFNLVFDRGTIFGLQSGGRTESILSSMPPMATWK. Residue 266 to 268 participates in substrate binding; sequence GGR.

This sequence belongs to the aerobic coproporphyrinogen-III oxidase family. As to quaternary structure, homodimer. Requires a divalent metal cation as cofactor.

The protein localises to the cytoplasm. It catalyses the reaction coproporphyrinogen III + O2 + 2 H(+) = protoporphyrinogen IX + 2 CO2 + 2 H2O. It participates in porphyrin-containing compound metabolism; protoporphyrin-IX biosynthesis; protoporphyrinogen-IX from coproporphyrinogen-III (O2 route): step 1/1. Involved in the heme biosynthesis. Catalyzes the aerobic oxidative decarboxylation of propionate groups of rings A and B of coproporphyrinogen-III to yield the vinyl groups in protoporphyrinogen-IX. This is Oxygen-dependent coproporphyrinogen-III oxidase from Francisella tularensis subsp. holarctica (strain LVS).